We begin with the raw amino-acid sequence, 191 residues long: Holliday junction branch migration complex subunit RuvA (191 aa).

A domain I region spans residues 1–64; the sequence is MIGRLSGVLL…EDAHILFGFG (64 aa). A domain II region spans residues 65–137; it reads TNEERNVFKQ…LKGKLGADLG (73 aa). A flexible linker region spans residues 137–141; it reads GVAGA. The segment at 142–191 is domain III; that stretch reads VATDATSDILNALLALGYSDKEAMLALKQVPAGTGVSDGIKLALKSLSKA.

It belongs to the RuvA family. Homotetramer. Forms an RuvA(8)-RuvB(12)-Holliday junction (HJ) complex. HJ DNA is sandwiched between 2 RuvA tetramers; dsDNA enters through RuvA and exits via RuvB. An RuvB hexamer assembles on each DNA strand where it exits the tetramer. Each RuvB hexamer is contacted by two RuvA subunits (via domain III) on 2 adjacent RuvB subunits; this complex drives branch migration. In the full resolvosome a probable DNA-RuvA(4)-RuvB(12)-RuvC(2) complex forms which resolves the HJ.

The protein resides in the cytoplasm. In terms of biological role, the RuvA-RuvB-RuvC complex processes Holliday junction (HJ) DNA during genetic recombination and DNA repair, while the RuvA-RuvB complex plays an important role in the rescue of blocked DNA replication forks via replication fork reversal (RFR). RuvA specifically binds to HJ cruciform DNA, conferring on it an open structure. The RuvB hexamer acts as an ATP-dependent pump, pulling dsDNA into and through the RuvAB complex. HJ branch migration allows RuvC to scan DNA until it finds its consensus sequence, where it cleaves and resolves the cruciform DNA. This chain is Holliday junction branch migration complex subunit RuvA, found in Janthinobacterium sp. (strain Marseille) (Minibacterium massiliensis).